A 354-amino-acid polypeptide reads, in one-letter code: NADH-quinone oxidoreductase subunit H (354 aa).

8 helical membrane passes run 22-42 (ILIR…YLIL), 91-111 (YLIA…VIPF), 124-144 (LLYV…AGWA), 168-188 (MGFA…SAIV), 203-223 (ILSW…ISGV), 255-275 (LFFL…ALMF), 291-311 (IPGF…FIWI), and 326-346 (LGWK…AIWI).

This sequence belongs to the complex I subunit 1 family. NDH-1 is composed of 14 different subunits. Subunits NuoA, H, J, K, L, M, N constitute the membrane sector of the complex.

The protein localises to the cell inner membrane. The catalysed reaction is a quinone + NADH + 5 H(+)(in) = a quinol + NAD(+) + 4 H(+)(out). Its function is as follows. NDH-1 shuttles electrons from NADH, via FMN and iron-sulfur (Fe-S) centers, to quinones in the respiratory chain. The immediate electron acceptor for the enzyme in this species is believed to be ubiquinone. Couples the redox reaction to proton translocation (for every two electrons transferred, four hydrogen ions are translocated across the cytoplasmic membrane), and thus conserves the redox energy in a proton gradient. This subunit may bind ubiquinone. This chain is NADH-quinone oxidoreductase subunit H, found in Cupriavidus taiwanensis (strain DSM 17343 / BCRC 17206 / CCUG 44338 / CIP 107171 / LMG 19424 / R1) (Ralstonia taiwanensis (strain LMG 19424)).